We begin with the raw amino-acid sequence, 792 residues long: Endonuclease MutS2 (792 aa).

334 to 341 serves as a coordination point for ATP; the sequence is GPNTGGKT. Residues 717–792 form the Smr domain; the sequence is INLIGKTTDE…DAGVTIATFK (76 aa).

It belongs to the DNA mismatch repair MutS family. MutS2 subfamily. As to quaternary structure, homodimer. Binds to stalled ribosomes, contacting rRNA.

Functionally, endonuclease that is involved in the suppression of homologous recombination and thus may have a key role in the control of bacterial genetic diversity. In terms of biological role, acts as a ribosome collision sensor, splitting the ribosome into its 2 subunits. Detects stalled/collided 70S ribosomes which it binds and splits by an ATP-hydrolysis driven conformational change. Acts upstream of the ribosome quality control system (RQC), a ribosome-associated complex that mediates the extraction of incompletely synthesized nascent chains from stalled ribosomes and their subsequent degradation. Probably generates substrates for RQC. The sequence is that of Endonuclease MutS2 from Agathobacter rectalis (strain ATCC 33656 / DSM 3377 / JCM 17463 / KCTC 5835 / VPI 0990) (Eubacterium rectale).